Consider the following 399-residue polypeptide: Accessory Sec system protein translocase subunit SecY2 (399 aa).

10 helical membrane passes run 14–34 (IFFT…SIVS), 60–80 (LNIF…LTLI), 102–122 (ALTL…YINK), 128–148 (SNML…VWLA), 152–172 (TTYG…KSIF), 183–203 (ASLI…LFFI), 237–257 (ISIM…NFIG), 272–292 (FTNP…GYFL), 335–355 (WFGS…ALLV), and 362–382 (VYFT…AETI).

Belongs to the SecY/SEC61-alpha family. SecY2 subfamily. Component of the accessory SecA2/SecY2 protein translocase complex required to export cell wall proteins. May form heterotrimers with SecE and SecG subunits.

The protein resides in the cell membrane. Part of the accessory SecA2/SecY2 system specifically required for export of possible cell wall proteins. The central subunit of a protein translocation channel. The sequence is that of Accessory Sec system protein translocase subunit SecY2 from Staphylococcus epidermidis (strain ATCC 12228 / FDA PCI 1200).